Reading from the N-terminus, the 84-residue chain is Exodeoxyribonuclease 7 small subunit (84 aa).

Belongs to the XseB family. Heterooligomer composed of large and small subunits.

It localises to the cytoplasm. It carries out the reaction Exonucleolytic cleavage in either 5'- to 3'- or 3'- to 5'-direction to yield nucleoside 5'-phosphates.. Functionally, bidirectionally degrades single-stranded DNA into large acid-insoluble oligonucleotides, which are then degraded further into small acid-soluble oligonucleotides. This is Exodeoxyribonuclease 7 small subunit from Haemophilus influenzae (strain 86-028NP).